We begin with the raw amino-acid sequence, 392 residues long: Gastricsin (392 aa).

An N-terminal signal peptide occupies residues 1 to 16 (MKWMVVALLCLPLLEA). The propeptide at 17–62 (ALIRVPLKKMKSIRETMKEQGVLKDFLKNHKYDPGQKYHFGKFGDY) is activation peptide. The Peptidase A1 domain occupies 76–389 (YYGEISIGTP…DMGNNRVGLA (314 aa)). Residue aspartate 94 is part of the active site. Disulfide bonds link cysteine 107-cysteine 112 and cysteine 270-cysteine 275. Aspartate 280 is an active-site residue. Cysteine 314 and cysteine 347 are oxidised to a cystine.

It belongs to the peptidase A1 family.

The protein localises to the secreted. It carries out the reaction More restricted specificity than pepsin A, but shows preferential cleavage at Tyr-|-Xaa bonds. High activity on hemoglobin.. Functionally, hydrolyzes a variety of proteins. The protein is Gastricsin (Pgc) of Mus musculus (Mouse).